The primary structure comprises 153 residues: MLDVIVLDDKQKELDNDDAKLVKKVLAFAFDFMQLKQNYEMSVNFVNDEKIHQINKEYRNTDRATDVISFALEESDRIHIDGVAEELGDLFISLDHAHAQAEEYLHSYNRELAYLAVHGFLHLLGYDHTRSQAAEDEMFGLQDKILEGYGLTK.

Zn(2+)-binding residues include H118, H122, and H128.

This sequence belongs to the endoribonuclease YbeY family. The cofactor is Zn(2+).

Its subcellular location is the cytoplasm. Single strand-specific metallo-endoribonuclease involved in late-stage 70S ribosome quality control and in maturation of the 3' terminus of the 16S rRNA. The polypeptide is Endoribonuclease YbeY (Oenococcus oeni (strain ATCC BAA-331 / PSU-1)).